The primary structure comprises 455 residues: Bifunctional protein GlmU (455 aa).

The tract at residues 1–232 is pyrophosphorylase; sequence MASITGALIL…DPNLLGVNDP (232 aa). Residues 10–13, lysine 24, glutamine 75, and 80–81 contribute to the UDP-N-acetyl-alpha-D-glucosamine site; these read LAAG and GT. Aspartate 106 provides a ligand contact to Mg(2+). Residues glycine 141, glutamate 155, asparagine 172, and asparagine 230 each coordinate UDP-N-acetyl-alpha-D-glucosamine. Asparagine 230 contacts Mg(2+). Residues 233–253 form a linker region; it reads AELIRSEALVRARIALNWIEK. Residues 254–455 form an N-acetyltransferase region; the sequence is RVLIHAPETV…QTTLPRRRNS (202 aa). UDP-N-acetyl-alpha-D-glucosamine contacts are provided by arginine 336 and lysine 354. Catalysis depends on histidine 366, which acts as the Proton acceptor. The UDP-N-acetyl-alpha-D-glucosamine site is built by tyrosine 369 and asparagine 380. Residues alanine 383, 389–390, serine 408, alanine 426, and arginine 443 contribute to the acetyl-CoA site; that span reads NY.

The protein in the N-terminal section; belongs to the N-acetylglucosamine-1-phosphate uridyltransferase family. It in the C-terminal section; belongs to the transferase hexapeptide repeat family. In terms of assembly, homotrimer. Mg(2+) serves as cofactor.

The protein resides in the cytoplasm. The enzyme catalyses alpha-D-glucosamine 1-phosphate + acetyl-CoA = N-acetyl-alpha-D-glucosamine 1-phosphate + CoA + H(+). The catalysed reaction is N-acetyl-alpha-D-glucosamine 1-phosphate + UTP + H(+) = UDP-N-acetyl-alpha-D-glucosamine + diphosphate. It participates in nucleotide-sugar biosynthesis; UDP-N-acetyl-alpha-D-glucosamine biosynthesis; N-acetyl-alpha-D-glucosamine 1-phosphate from alpha-D-glucosamine 6-phosphate (route II): step 2/2. It functions in the pathway nucleotide-sugar biosynthesis; UDP-N-acetyl-alpha-D-glucosamine biosynthesis; UDP-N-acetyl-alpha-D-glucosamine from N-acetyl-alpha-D-glucosamine 1-phosphate: step 1/1. The protein operates within bacterial outer membrane biogenesis; LPS lipid A biosynthesis. In terms of biological role, catalyzes the last two sequential reactions in the de novo biosynthetic pathway for UDP-N-acetylglucosamine (UDP-GlcNAc). The C-terminal domain catalyzes the transfer of acetyl group from acetyl coenzyme A to glucosamine-1-phosphate (GlcN-1-P) to produce N-acetylglucosamine-1-phosphate (GlcNAc-1-P), which is converted into UDP-GlcNAc by the transfer of uridine 5-monophosphate (from uridine 5-triphosphate), a reaction catalyzed by the N-terminal domain. This is Bifunctional protein GlmU from Nitratidesulfovibrio vulgaris (strain DSM 19637 / Miyazaki F) (Desulfovibrio vulgaris).